The sequence spans 529 residues: Heat shock protein 60 (529 aa).

Residues 460–484 form a disordered region; the sequence is YQATVQHPPPQSSYEEDGRRPPTQP.

The sequence is that of Heat shock protein 60 from Giardia intestinalis (Giardia lamblia).